The following is a 413-amino-acid chain: Multifunctional CCA protein (413 aa).

ATP-binding residues include G8 and R11. CTP-binding residues include G8 and R11. Residues D21 and D23 each contribute to the Mg(2+) site. The ATP site is built by R91, R137, and R140. CTP is bound by residues R91, R137, and R140. One can recognise an HD domain in the interval 228–329 (TGLHTLMTVT…VKLFDSIDAW (102 aa)).

The protein belongs to the tRNA nucleotidyltransferase/poly(A) polymerase family. Bacterial CCA-adding enzyme type 1 subfamily. Monomer. Can also form homodimers and oligomers. Mg(2+) serves as cofactor. Requires Ni(2+) as cofactor.

The catalysed reaction is a tRNA precursor + 2 CTP + ATP = a tRNA with a 3' CCA end + 3 diphosphate. It catalyses the reaction a tRNA with a 3' CCA end + 2 CTP + ATP = a tRNA with a 3' CCACCA end + 3 diphosphate. Catalyzes the addition and repair of the essential 3'-terminal CCA sequence in tRNAs without using a nucleic acid template. Adds these three nucleotides in the order of C, C, and A to the tRNA nucleotide-73, using CTP and ATP as substrates and producing inorganic pyrophosphate. tRNA 3'-terminal CCA addition is required both for tRNA processing and repair. Also involved in tRNA surveillance by mediating tandem CCA addition to generate a CCACCA at the 3' terminus of unstable tRNAs. While stable tRNAs receive only 3'-terminal CCA, unstable tRNAs are marked with CCACCA and rapidly degraded. The chain is Multifunctional CCA protein from Klebsiella pneumoniae subsp. pneumoniae (strain ATCC 700721 / MGH 78578).